Here is an 82-residue protein sequence, read N- to C-terminus: Cytochrome b559 subunit alpha (82 aa).

A helical membrane pass occupies residues 22 to 36 (IIHAVTLPAIFIAGF). His-24 contributes to the heme binding site.

This sequence belongs to the PsbE/PsbF family. In terms of assembly, heterodimer of an alpha subunit and a beta subunit. PSII is composed of 1 copy each of membrane proteins PsbA, PsbB, PsbC, PsbD, PsbE, PsbF, PsbH, PsbI, PsbJ, PsbK, PsbL, PsbM, PsbT, PsbX, PsbY, Psb30/Ycf12, peripheral proteins PsbO, CyanoQ (PsbQ), PsbU, PsbV and a large number of cofactors. It forms dimeric complexes. The cofactor is heme b.

It is found in the cellular thylakoid membrane. In terms of biological role, this b-type cytochrome is tightly associated with the reaction center of photosystem II (PSII). PSII is a light-driven water:plastoquinone oxidoreductase that uses light energy to abstract electrons from H(2)O, generating O(2) and a proton gradient subsequently used for ATP formation. It consists of a core antenna complex that captures photons, and an electron transfer chain that converts photonic excitation into a charge separation. This Prochlorococcus marinus (strain MIT 9515) protein is Cytochrome b559 subunit alpha.